The following is a 166-amino-acid chain: Small ribosomal subunit protein cS23z (166 aa).

The protein belongs to the chloroplast-specific ribosomal protein cS23 family. Part of the 30S ribosomal subunit.

The protein resides in the plastid. Its subcellular location is the chloroplast. Functionally, component of the chloroplast ribosome (chloro-ribosome), a dedicated translation machinery responsible for the synthesis of chloroplast genome-encoded proteins, including proteins of the transcription and translation machinery and components of the photosynthetic apparatus. The polypeptide is Small ribosomal subunit protein cS23z (Arabidopsis thaliana (Mouse-ear cress)).